The chain runs to 236 residues: tRNA (guanine-N(1)-)-methyltransferase (236 aa).

S-adenosyl-L-methionine is bound by residues G113 and 133 to 138 (IGDYVL).

It belongs to the RNA methyltransferase TrmD family. Homodimer.

The protein localises to the cytoplasm. It carries out the reaction guanosine(37) in tRNA + S-adenosyl-L-methionine = N(1)-methylguanosine(37) in tRNA + S-adenosyl-L-homocysteine + H(+). Specifically methylates guanosine-37 in various tRNAs. The protein is tRNA (guanine-N(1)-)-methyltransferase of Lachnospira eligens (strain ATCC 27750 / DSM 3376 / VPI C15-48 / C15-B4) (Eubacterium eligens).